The following is a 263-amino-acid chain: MKMRLHFVVDPMGWFCMSMVFFVWIYNSFLIPKLVLLPHYAEGHITAEPVICYYLASLLCFSALFRASTTDPGKLAQDPKIPLAERDNWELCNKCNMMRPKRSHHCSRCGHCVRRMDHHCPWINNCVGEDNHWLFLQLCFYTQVLSFYTLVLDFCQYYYFLPLSSVDQADFAVHHELALLRVSCFMGLIMFGGISSLFYTQVKGILTDTTTIEKMSHLTEEVPRRPWQQAMAEVFGTRWKVLWFLPFRSRHPLKLNLTIRSHV.

Over M1–R4 the chain is Cytoplasmic. A helical membrane pass occupies residues L5 to I25. The Extracellular portion of the chain corresponds to Y26–H44. Residues I45–F65 traverse the membrane as a helical segment. The Cytoplasmic segment spans residues R66–N131. Positions E90–F140 constitute a DHHC domain. C120 functions as the S-palmitoyl cysteine intermediate in the catalytic mechanism. Residues H132–L152 form a helical membrane-spanning segment. Residues D153–R181 are Extracellular-facing. Residues V182–V202 form a helical membrane-spanning segment. At K203 to V263 the chain is on the cytoplasmic side.

The protein belongs to the DHHC palmitoyltransferase family.

It localises to the golgi apparatus membrane. Its subcellular location is the golgi apparatus. The protein resides in the cis-Golgi network membrane. It is found in the cell membrane. The catalysed reaction is L-cysteinyl-[protein] + hexadecanoyl-CoA = S-hexadecanoyl-L-cysteinyl-[protein] + CoA. In terms of biological role, palmitoyltransferase that catalyzes the addition of palmitate onto various protein substrates. This Danio rerio (Zebrafish) protein is Palmitoyltransferase ZDHHC21.